Consider the following 288-residue polypeptide: Protein-S-isoprenylcysteine O-methyltransferase (288 aa).

A helical membrane pass occupies residues 13-29 (SIVSFTLGASVISLPLL). Residues 30–45 (TSSFTEQTLLAAAPGR) lie on the Lumenal side of the membrane. A helical membrane pass occupies residues 46-63 (IALVFFIAALNGLLLLLY). The Cytoplasmic portion of the chain corresponds to 64–73 (KAQLYQVAIR). The chain crosses the membrane as a helical span at residues 74–91 (ASFLGFAFGCGLLLSITQ). The Lumenal portion of the chain corresponds to 92–96 (SPWKP). A helical membrane pass occupies residues 97-116 (FGWYVCSLSFFHYSEYLVTA). Over 117–135 (MNNPRSLSIDSFLLNHSLE) the chain is Cytoplasmic. The chain crosses the membrane as a helical span at residues 136-153 (YTLAALSSWVEFTIETTI). At 154-158 (YPDLK) the chain is on the lumenal side. A helical membrane pass occupies residues 159-178 (QITWLSVIGLIMVLFGEVLR). The Cytoplasmic portion of the chain corresponds to 179–216 (KCAMLTAGSNFNHIVQNEKSDSHTLVTSGVYSWFRHPS). S-adenosyl-L-methionine is bound by residues Gln194, 201 to 204 (HTLV), Tyr209, and 214 to 217 (HPSY). Residues 217–232 (YVGWFYWSIGTQVLLC) traverse the membrane as a helical segment. Residue Asn233 is a topological domain, lumenal. A helical membrane pass occupies residues 234 to 248 (PLCLVGYTLASWRFF). The Cytoplasmic portion of the chain corresponds to 249-288 (SERIEEEEFSLIHFFGENYLEYKKKVPTGLPFIKGVKMEP). Substrate is bound at residue Arg251. Glu255 is an S-adenosyl-L-methionine binding site.

Belongs to the class VI-like SAM-binding methyltransferase superfamily. Isoprenylcysteine carboxyl methyltransferase family.

The protein localises to the endoplasmic reticulum membrane. It carries out the reaction [protein]-C-terminal S-[(2E,6E)-farnesyl]-L-cysteine + S-adenosyl-L-methionine = [protein]-C-terminal S-[(2E,6E)-farnesyl]-L-cysteine methyl ester + S-adenosyl-L-homocysteine. In terms of biological role, catalyzes the post-translational methylation of isoprenylated C-terminal cysteine residues. This Xenopus laevis (African clawed frog) protein is Protein-S-isoprenylcysteine O-methyltransferase (icmt).